The chain runs to 258 residues: Hydroxyethylthiazole kinase (258 aa).

Met-37 is a substrate binding site. Residues Arg-112 and Thr-158 each coordinate ATP. Ala-185 lines the substrate pocket.

It belongs to the Thz kinase family. Mg(2+) is required as a cofactor.

The catalysed reaction is 5-(2-hydroxyethyl)-4-methylthiazole + ATP = 4-methyl-5-(2-phosphooxyethyl)-thiazole + ADP + H(+). Its pathway is cofactor biosynthesis; thiamine diphosphate biosynthesis; 4-methyl-5-(2-phosphoethyl)-thiazole from 5-(2-hydroxyethyl)-4-methylthiazole: step 1/1. Catalyzes the phosphorylation of the hydroxyl group of 4-methyl-5-beta-hydroxyethylthiazole (THZ). This is Hydroxyethylthiazole kinase from Rhizobium etli (strain CIAT 652).